A 222-amino-acid polypeptide reads, in one-letter code: uncharacterized protein (222 aa).

In terms of domain architecture, HTH gntR-type spans 8-77 (AKKGQIIYRY…GNAGYFVAKN (70 aa)).

This is an uncharacterized protein from Mycoplasma pneumoniae (strain ATCC 29342 / M129 / Subtype 1) (Mycoplasmoides pneumoniae).